The following is a 421-amino-acid chain: Tyrosine--tRNA ligase (421 aa).

Tyrosine 35 lines the L-tyrosine pocket. The 'HIGH' region motif lies at 40-49 (PTADSLHIGH). The L-tyrosine site is built by tyrosine 170 and glutamine 174. Residues 232–236 (KFGKT) carry the 'KMSKS' region motif. ATP is bound at residue lysine 235. The 67-residue stretch at 355–421 (LSLVDVLVES…GKKKYFLITY (67 aa)) folds into the S4 RNA-binding domain.

The protein belongs to the class-I aminoacyl-tRNA synthetase family. TyrS type 1 subfamily. As to quaternary structure, homodimer.

It is found in the cytoplasm. It carries out the reaction tRNA(Tyr) + L-tyrosine + ATP = L-tyrosyl-tRNA(Tyr) + AMP + diphosphate + H(+). In terms of biological role, catalyzes the attachment of tyrosine to tRNA(Tyr) in a two-step reaction: tyrosine is first activated by ATP to form Tyr-AMP and then transferred to the acceptor end of tRNA(Tyr). This is Tyrosine--tRNA ligase from Bacillus velezensis (strain DSM 23117 / BGSC 10A6 / LMG 26770 / FZB42) (Bacillus amyloliquefaciens subsp. plantarum).